A 188-amino-acid chain; its full sequence is GMP synthase [glutamine-hydrolyzing] subunit A (188 aa).

A Glutamine amidotransferase type-1 domain is found at 1–188 (MIVILDNGGQ…FCKVCGYKFE (188 aa)). Catalysis depends on cysteine 76, which acts as the Nucleophile. Residues histidine 163 and glutamate 165 contribute to the active site.

As to quaternary structure, heterodimer composed of a glutamine amidotransferase subunit (A) and a GMP-binding subunit (B).

It catalyses the reaction XMP + L-glutamine + ATP + H2O = GMP + L-glutamate + AMP + diphosphate + 2 H(+). It functions in the pathway purine metabolism; GMP biosynthesis; GMP from XMP (L-Gln route): step 1/1. Catalyzes the synthesis of GMP from XMP. The protein is GMP synthase [glutamine-hydrolyzing] subunit A of Methanocaldococcus jannaschii (strain ATCC 43067 / DSM 2661 / JAL-1 / JCM 10045 / NBRC 100440) (Methanococcus jannaschii).